A 270-amino-acid polypeptide reads, in one-letter code: Thiazole synthase (270 aa).

The Schiff-base intermediate with DXP role is filled by lysine 112. Residues glycine 173, 199 to 200, and 221 to 222 each bind 1-deoxy-D-xylulose 5-phosphate; these read AG and NS.

Belongs to the ThiG family. In terms of assembly, homotetramer. Forms heterodimers with either ThiH or ThiS.

It localises to the cytoplasm. The enzyme catalyses [ThiS sulfur-carrier protein]-C-terminal-Gly-aminoethanethioate + 2-iminoacetate + 1-deoxy-D-xylulose 5-phosphate = [ThiS sulfur-carrier protein]-C-terminal Gly-Gly + 2-[(2R,5Z)-2-carboxy-4-methylthiazol-5(2H)-ylidene]ethyl phosphate + 2 H2O + H(+). The protein operates within cofactor biosynthesis; thiamine diphosphate biosynthesis. Catalyzes the rearrangement of 1-deoxy-D-xylulose 5-phosphate (DXP) to produce the thiazole phosphate moiety of thiamine. Sulfur is provided by the thiocarboxylate moiety of the carrier protein ThiS. In vitro, sulfur can be provided by H(2)S. The protein is Thiazole synthase of Pseudomonas entomophila (strain L48).